The chain runs to 518 residues: MFS-type transporter cnsO (518 aa).

Over residues 1 to 13 (MESTDSSPPLSMT) the composition is skewed to polar residues. A disordered region spans residues 1–24 (MESTDSSPPLSMTDTEKKGDAVTT). The next 9 helical transmembrane spans lie at 99-119 (LALMYFFFTYGLSEPVSNIML), 122-142 (VGPKIWFPFIVCAWGLITTLT), 156-176 (LMLGITEAGLYPGAYFILSMW), 187-207 (AIFYGANTTAGAFGGVIAYGV), 221-241 (WLFLIEGCITIFAGLACLFCL), 298-318 (FMMMLFWWGGSVPTYSLSYTL), 334-354 (VMTTPPYIFATCVCVAVGYIS), 362-382 (LCIMGAYTLGLIGIIILWITV), and 392-412 (YFAIFLAAAGYSAQAPIVGAW). N416 carries N-linked (GlcNAc...) asparagine glycosylation. 2 consecutive transmembrane segments (helical) span residues 427-447 (IGLLMLLGSVGGGSIGSNIYI) and 455-475 (PLGFGFSVGATVLGAMIPATI).

Belongs to the major facilitator superfamily.

It localises to the cell membrane. Functionally, MFS-type transporter; part of the gene cluster that mediates the biosynthesis of communesins, a prominent class of indole alkaloids with great potential as pharmaceuticals. With the MFS transporter cnsL, is most likely responsible for cummunesins secretion and thereby may contribute to intrinsic resistance. The polypeptide is MFS-type transporter cnsO (Penicillium expansum (Blue mold rot fungus)).